A 484-amino-acid polypeptide reads, in one-letter code: ATP synthase subunit beta (484 aa).

ATP is bound at residue 169-176 (GGAGVGKT).

This sequence belongs to the ATPase alpha/beta chains family. As to quaternary structure, F-type ATPases have 2 components, CF(1) - the catalytic core - and CF(0) - the membrane proton channel. CF(1) has five subunits: alpha(3), beta(3), gamma(1), delta(1), epsilon(1). CF(0) has three main subunits: a(1), b(2) and c(9-12). The alpha and beta chains form an alternating ring which encloses part of the gamma chain. CF(1) is attached to CF(0) by a central stalk formed by the gamma and epsilon chains, while a peripheral stalk is formed by the delta and b chains.

The protein localises to the cell membrane. The enzyme catalyses ATP + H2O + 4 H(+)(in) = ADP + phosphate + 5 H(+)(out). Its function is as follows. Produces ATP from ADP in the presence of a proton gradient across the membrane. The catalytic sites are hosted primarily by the beta subunits. This Nocardioides sp. (strain ATCC BAA-499 / JS614) protein is ATP synthase subunit beta.